A 974-amino-acid chain; its full sequence is Membrane-associated phosphatidylinositol transfer protein 3 (974 aa).

Phosphoserine occurs at positions 30, 31, 109, 295, 298, 321, 343, and 495. The interval Cys310–Thr347 is disordered. Residues Leu312–Val325 are compositionally biased toward polar residues. One can recognise a DDHD domain in the interval Phe390–Arg594. The interval Pro497–Ala535 is disordered. A compositionally biased stretch (low complexity) spans Lys520 to Ser533. Ser612, Ser907, Ser928, and Ser946 each carry phosphoserine. Residues Met927–Pro974 are disordered.

Belongs to the PtdIns transfer protein family. PI transfer class IIA subfamily. Interacts with PTK2B via its C-terminus.

It is found in the endomembrane system. Functionally, catalyzes the transfer of phosphatidylinositol and phosphatidylcholine between membranes (in vitro). Binds calcium ions. This chain is Membrane-associated phosphatidylinositol transfer protein 3 (Pitpnm3), found in Mus musculus (Mouse).